Consider the following 445-residue polypeptide: MGKKDKRSKLEGDELAEAQQKGSFQLPSSNETAKLDASQWPLLLKNYDKLNVRTNHYTPHVEGVSPLKRDIKNYISSGFFNLDKPSNPSSHEVVSWIKRILRCEKTGHSGTLDPKVSGCLIVCIDRTTRLAKSQQGAGKEYICIFKLHEEVEDERKVKQALEKLTGALFQRPPLISAVKRQLRIRTVYENKFIEYDPAQQMGIFNCICESGTYVRTICVHLGLILGCGGQMQELRRNRSGICDENENMVTMHDVLDAQYMLDTQKDESYMRHIVRPLEALLTQHKRVVVKDSCVNAICYGAKILIPGILRYDDDIEVGKEIVIMTTKGEAICIAIAQMSTSTIASVDHGIVAKSKRVIMERDVYGRKWGLGPVASKKKQMVKDGLLDKFGKPNITTPKSWAKEYVQTDKVKKEQEDKEDEEEEEAPKKKSKKAAKKEVSSSSDSE.

Residues 1–32 (MGKKDKRSKLEGDELAEAQQKGSFQLPSSNET) are disordered. Residues 20 to 32 (QKGSFQLPSSNET) are compositionally biased toward polar residues. Residue D113 is the Nucleophile of the active site. The region spanning 284–359 (HKRVVVKDSC…IVAKSKRVIM (76 aa)) is the PUA domain. The segment at 407-445 (TDKVKKEQEDKEDEEEEEAPKKKSKKAAKKEVSSSSDSE) is disordered.

The protein belongs to the pseudouridine synthase TruB family. As to quaternary structure, component of the small nucleolar ribonucleoprotein particle containing H/ACA-type snoRNAs (H/ACA snoRNPs).

It localises to the nucleus. The protein localises to the nucleolus. It carries out the reaction a uridine in RNA = a pseudouridine in RNA. Its function is as follows. Plays a central role in ribosomal RNA processing. Probable catalytic subunit of H/ACA small nucleolar ribonucleoprotein (H/ACA snoRNP) complex, which catalyzes pseudouridylation of rRNA. This involves the isomerization of uridine such that the ribose is subsequently attached to C5, instead of the normal N1. Pseudouridine ('psi') residues may serve to stabilize the conformation of rRNAs. The chain is Putative H/ACA ribonucleoprotein complex subunit 4 from Caenorhabditis briggsae.